We begin with the raw amino-acid sequence, 252 residues long: Protein BTG3 (252 aa).

The segment at 138 to 162 is disordered; sequence VTSDYHSGSSSSDEETSKEMEVKPS.

This sequence belongs to the BTG family. In terms of tissue distribution, ubiquitous. High expression in the ventricular zone of the developing central nervous system. High in ovary, testis, prostate, thymus and lung.

In terms of biological role, overexpression impairs serum-induced cell cycle progression from the G0/G1 to S phase. The sequence is that of Protein BTG3 (BTG3) from Homo sapiens (Human).